Here is a 380-residue protein sequence, read N- to C-terminus: Crotonobetainyl-CoA reductase (380 aa).

Belongs to the acyl-CoA dehydrogenase family. As to quaternary structure, homotetramer. FAD serves as cofactor.

It localises to the cytoplasm. The catalysed reaction is 4-(trimethylamino)butanoyl-CoA + oxidized [electron-transfer flavoprotein] + H(+) = crotonobetainyl-CoA + reduced [electron-transfer flavoprotein]. Its pathway is amine and polyamine metabolism; carnitine metabolism. Its function is as follows. Catalyzes the reduction of crotonobetainyl-CoA to gamma-butyrobetainyl-CoA. The polypeptide is Crotonobetainyl-CoA reductase (Shigella flexneri serotype 5b (strain 8401)).